Consider the following 576-residue polypeptide: Proline--tRNA ligase (576 aa).

This sequence belongs to the class-II aminoacyl-tRNA synthetase family. ProS type 1 subfamily. In terms of assembly, homodimer.

It localises to the cytoplasm. The enzyme catalyses tRNA(Pro) + L-proline + ATP = L-prolyl-tRNA(Pro) + AMP + diphosphate. In terms of biological role, catalyzes the attachment of proline to tRNA(Pro) in a two-step reaction: proline is first activated by ATP to form Pro-AMP and then transferred to the acceptor end of tRNA(Pro). As ProRS can inadvertently accommodate and process non-cognate amino acids such as alanine and cysteine, to avoid such errors it has two additional distinct editing activities against alanine. One activity is designated as 'pretransfer' editing and involves the tRNA(Pro)-independent hydrolysis of activated Ala-AMP. The other activity is designated 'posttransfer' editing and involves deacylation of mischarged Ala-tRNA(Pro). The misacylated Cys-tRNA(Pro) is not edited by ProRS. The sequence is that of Proline--tRNA ligase from Finegoldia magna (strain ATCC 29328 / DSM 20472 / WAL 2508) (Peptostreptococcus magnus).